Here is a 154-residue protein sequence, read N- to C-terminus: 6,7-dimethyl-8-ribityllumazine synthase (154 aa).

5-amino-6-(D-ribitylamino)uracil contacts are provided by residues Trp-22, 56–58 (AWE), and 80–82 (CVV). A (2S)-2-hydroxy-3-oxobutyl phosphate-binding site is contributed by 85–86 (DT). Catalysis depends on His-88, which acts as the Proton donor. A 5-amino-6-(D-ribitylamino)uracil-binding site is contributed by Asn-113. Arg-127 serves as a coordination point for (2S)-2-hydroxy-3-oxobutyl phosphate.

The protein belongs to the DMRL synthase family. In terms of assembly, forms an icosahedral capsid composed of 60 subunits, arranged as a dodecamer of pentamers.

It catalyses the reaction (2S)-2-hydroxy-3-oxobutyl phosphate + 5-amino-6-(D-ribitylamino)uracil = 6,7-dimethyl-8-(1-D-ribityl)lumazine + phosphate + 2 H2O + H(+). Its pathway is cofactor biosynthesis; riboflavin biosynthesis; riboflavin from 2-hydroxy-3-oxobutyl phosphate and 5-amino-6-(D-ribitylamino)uracil: step 1/2. In terms of biological role, catalyzes the formation of 6,7-dimethyl-8-ribityllumazine by condensation of 5-amino-6-(D-ribitylamino)uracil with 3,4-dihydroxy-2-butanone 4-phosphate. This is the penultimate step in the biosynthesis of riboflavin. In Xylella fastidiosa (strain 9a5c), this protein is 6,7-dimethyl-8-ribityllumazine synthase.